Reading from the N-terminus, the 477-residue chain is Mitochondrial adenyl nucleotide antiporter SLC25A24 (477 aa).

Positions 1-173 (MLRWLRDFVL…RFWKHSTGID (173 aa)) are regulatory N-terminal domain. At 1–197 (MLRWLRDFVL…EKKSGQWWRQ (197 aa)) the chain is on the mitochondrial intermembrane side. 4 consecutive EF-hand domains span residues 19-54 (EQPT…LGIP), 55-88 (LGQD…KDHE), 86-121 (DHEK…LGLT), and 122-157 (ISEQ…NPVT). 20 residues coordinate Ca(2+): aspartate 32, asparagine 34, aspartate 36, valine 38, glutamate 43, aspartate 68, asparagine 70, aspartate 72, lysine 74, glutamate 79, aspartate 99, asparagine 101, aspartate 103, lysine 105, glutamate 110, aspartate 135, aspartate 137, threonine 139, threonine 141, and glutamate 146. Positions 159 to 168 (IEEIIRFWKH) are linker region. Positions 174–477 (IGDSLTIPDE…MKQTLGVTQK (304 aa)) are C-terminal transmembrane transporter domain. Solcar repeat units follow at residues 192-278 (GQWW…YKKL), 286-371 (IGTF…LKSY), and 383-471 (PGVM…MKQT). Residues 198–215 (LLAGGIAGAVSRTSTAPL) form a helical membrane-spanning segment. At 216-252 (DRLKIMMQVHGSKSDKMNIFGGFRQMVKEGGIRSLWR) the chain is on the mitochondrial matrix side. The helical transmembrane segment at 253-272 (GNGTNVIKIAPETAVKFWAY) threads the bilayer. Residues 273–295 (EQYKKLLTEEGQKIGTFERFISG) are Mitochondrial intermembrane-facing. Residues 296 to 309 (SMAGATAQTFIYPM) form a helical membrane-spanning segment. The Mitochondrial matrix segment spans residues 310 to 345 (EVMKTRLAVGKTGQYSGIYDCAKKILKHEGLGAFYK). Residue lysine 320 is modified to N6-acetyllysine; alternate. Position 320 is an N6-succinyllysine; alternate (lysine 320). N6-acetyllysine is present on lysine 336. A helical transmembrane segment spans residues 346–365 (GYVPNLLGIIPYAGIDLAVY). Over 366-388 (ELLKSYWLDNFAKDSVNPGVMVL) the chain is Mitochondrial intermembrane. A helical membrane pass occupies residues 389-406 (LGCGALSSTCGQLASYPL). Topologically, residues 407 to 445 (ALVRTRMQAQAMLEGSPQLNMVGLFRRIISKEGIPGLYR) are mitochondrial matrix. Lysine 437 is subject to N6-acetyllysine; alternate. Lysine 437 is subject to N6-succinyllysine; alternate. Residues 446–465 (GITPNFMKVLPAVGISYVVY) form a helical membrane-spanning segment. The Mitochondrial intermembrane portion of the chain corresponds to 466–477 (ENMKQTLGVTQK).

This sequence belongs to the mitochondrial carrier (TC 2.A.29) family. As to quaternary structure, monomer. Expressed in all tissues tested. Highly expressed in testis, expressed at intermediate level in small intestine and pancreas, and weakly expressed in kidney, spleen, liver, skeletal muscle and heart.

The protein localises to the mitochondrion inner membrane. The catalysed reaction is Mg(2+)(out) + phosphate(in) + ATP(out) = Mg(2+)(in) + phosphate(out) + ATP(in). The enzyme catalyses ADP(out) + phosphate(in) + H(+)(out) = ADP(in) + phosphate(out) + H(+)(in). It catalyses the reaction AMP(out) + phosphate(in) = AMP(in) + phosphate(out). It carries out the reaction phosphate(in) + ATP(out) + 2 H(+)(out) = phosphate(out) + ATP(in) + 2 H(+)(in). The catalysed reaction is dADP(in) + ADP(out) = dADP(out) + ADP(in). The enzyme catalyses Mg(2+)(in) + ADP(out) + ATP(in) + H(+)(out) = Mg(2+)(out) + ADP(in) + ATP(out) + H(+)(in). It catalyses the reaction ADP(out) + diphosphate(in) = ADP(in) + diphosphate(out). It carries out the reaction dAMP(in) + ADP(out) + H(+)(out) = dAMP(out) + ADP(in) + H(+)(in). The catalysed reaction is 3'-AMP(in) + ADP(out) + H(+)(out) = 3'-AMP(out) + ADP(in) + H(+)(in). The enzyme catalyses dAMP(out) + phosphate(in) = dAMP(in) + phosphate(out). It catalyses the reaction 3'-AMP(out) + phosphate(in) = 3'-AMP(in) + phosphate(out). It carries out the reaction dADP(out) + phosphate(in) + H(+)(out) = dADP(in) + phosphate(out) + H(+)(in). Activated by an increase in cytosolic calcium levels that induce a conformational change of the N-terminal regulatory domain, uncapping the channel and allowing transport. Inhibited by bathophenanthroline, mersalyl, p-hydroxymercuribenzoate, bromcresol purple and tannic acid. Electroneutral antiporter that mediates the transport of adenyl nucleotides through the inner mitochondrial membrane. Originally identified as an ATP-magnesium/inorganic phosphate antiporter, it also acts as a broad specificity adenyl nucleotide antiporter. By regulating the mitochondrial matrix adenyl nucleotide pool could adapt to changing cellular energetic demands and indirectly regulate adenyl nucleotide-dependent metabolic pathways. In vitro, a low activity is also observed with guanyl and pyrimidine nucleotides. May play a role in protecting cells against oxidative stress-induced cell death, by buffering calcium levels in the mitochondrial matrix through the formation of calcium-phosphate precipitates. This chain is Mitochondrial adenyl nucleotide antiporter SLC25A24, found in Homo sapiens (Human).